We begin with the raw amino-acid sequence, 337 residues long: Holliday junction branch migration complex subunit RuvB (337 aa).

The large ATPase domain (RuvB-L) stretch occupies residues 1–179 (MTHQVSVLHQ…FSFSGRVSYY (179 aa)). ATP is bound by residues leucine 18, arginine 19, glycine 60, lysine 63, threonine 64, serine 65, 126–128 (EDY), arginine 169, tyrosine 179, and arginine 216. Mg(2+) is bound at residue threonine 64. Residues 180–250 (SDEDLATILK…VAEKALSMLL (71 aa)) form a small ATPAse domain (RuvB-S) region. The head domain (RuvB-H) stretch occupies residues 253–337 (DWGLNEIDIK…DNLQILGEEK (85 aa)). DNA is bound by residues lysine 308 and arginine 313.

Belongs to the RuvB family. As to quaternary structure, homohexamer. Forms an RuvA(8)-RuvB(12)-Holliday junction (HJ) complex. HJ DNA is sandwiched between 2 RuvA tetramers; dsDNA enters through RuvA and exits via RuvB. An RuvB hexamer assembles on each DNA strand where it exits the tetramer. Each RuvB hexamer is contacted by two RuvA subunits (via domain III) on 2 adjacent RuvB subunits; this complex drives branch migration. In the full resolvosome a probable DNA-RuvA(4)-RuvB(12)-RuvC(2) complex forms which resolves the HJ.

It localises to the cytoplasm. The catalysed reaction is ATP + H2O = ADP + phosphate + H(+). Functionally, the RuvA-RuvB-RuvC complex processes Holliday junction (HJ) DNA during genetic recombination and DNA repair, while the RuvA-RuvB complex plays an important role in the rescue of blocked DNA replication forks via replication fork reversal (RFR). RuvA specifically binds to HJ cruciform DNA, conferring on it an open structure. The RuvB hexamer acts as an ATP-dependent pump, pulling dsDNA into and through the RuvAB complex. RuvB forms 2 homohexamers on either side of HJ DNA bound by 1 or 2 RuvA tetramers; 4 subunits per hexamer contact DNA at a time. Coordinated motions by a converter formed by DNA-disengaged RuvB subunits stimulates ATP hydrolysis and nucleotide exchange. Immobilization of the converter enables RuvB to convert the ATP-contained energy into a lever motion, pulling 2 nucleotides of DNA out of the RuvA tetramer per ATP hydrolyzed, thus driving DNA branch migration. The RuvB motors rotate together with the DNA substrate, which together with the progressing nucleotide cycle form the mechanistic basis for DNA recombination by continuous HJ branch migration. Branch migration allows RuvC to scan DNA until it finds its consensus sequence, where it cleaves and resolves cruciform DNA. This chain is Holliday junction branch migration complex subunit RuvB, found in Chlamydia felis (strain Fe/C-56) (Chlamydophila felis).